Reading from the N-terminus, the 858-residue chain is DNA mismatch repair protein MutS (858 aa).

ATP is bound at residue 609–616 (GPNMSGKS).

Belongs to the DNA mismatch repair MutS family.

Its function is as follows. This protein is involved in the repair of mismatches in DNA. It is possible that it carries out the mismatch recognition step. This protein has a weak ATPase activity. The sequence is that of DNA mismatch repair protein MutS from Enterococcus faecalis (strain ATCC 700802 / V583).